The sequence spans 295 residues: MMAKKPPKPAPRRIFQERLKITALPLYFEGFLLIKRSGYREYEHYWTELRGTTLFFYTDKKSIIYVDKLDIVDLTCLTEQNSTEKNCAKFTLVLPKEEVQLKTENTESGEEWRGFILTVTELSVPQNVSLLPGQVIKLHEVLEREKKRRIETEQSTSVEKEKEPTEDYVDVLNPMPACFYTVSRKEATEMLQKNPSLGNMILRPGSDSRNYSITIRQEIDIPRIKHYKVMSVGQNYTIELEKPVTLPNLFSVIDYFVKETRGNLRPFICSTDENTGQEPSMEGRSEKLKKNPHIA.

One can recognise a PH domain in the interval 25-121 (PLYFEGFLLI…WRGFILTVTE (97 aa)). At Tyr168 the chain carries Phosphotyrosine. An SH2 domain is found at 177–280 (ACFYTVSRKE…TDENTGQEPS (104 aa)). Residues 270–295 (STDENTGQEPSMEGRSEKLKKNPHIA) are disordered.

Interacts with KIT and CSF1R. Interacts with URI1; the interaction is phosphorylation-dependent and occurs in a growth-dependent manner. Phosphorylated on tyrosine by TEC. Phosphorylated on tyrosine by KIT.

It localises to the nucleus. It is found in the cytoplasm. The protein localises to the mitochondrion. In BCR signaling, appears to function as a docking protein acting downstream of TEC and participates in a positive feedback loop by increasing the activity of TEC. The sequence is that of Signal-transducing adaptor protein 1 (STAP1) from Homo sapiens (Human).